A 185-amino-acid chain; its full sequence is Transcription termination/antitermination protein NusG (185 aa).

The KOW domain occupies 134 to 162; that stretch reads PGQMVRVIDGPFNDFDGLVEEVNYEKNRL.

The protein belongs to the NusG family.

Its function is as follows. Participates in transcription elongation, termination and antitermination. The protein is Transcription termination/antitermination protein NusG of Xylella fastidiosa (strain 9a5c).